A 206-amino-acid chain; its full sequence is 3-isopropylmalate dehydratase small subunit (206 aa).

Belongs to the LeuD family. LeuD type 1 subfamily. In terms of assembly, heterodimer of LeuC and LeuD.

The catalysed reaction is (2R,3S)-3-isopropylmalate = (2S)-2-isopropylmalate. The protein operates within amino-acid biosynthesis; L-leucine biosynthesis; L-leucine from 3-methyl-2-oxobutanoate: step 2/4. In terms of biological role, catalyzes the isomerization between 2-isopropylmalate and 3-isopropylmalate, via the formation of 2-isopropylmaleate. The polypeptide is 3-isopropylmalate dehydratase small subunit (Leptospira interrogans serogroup Icterohaemorrhagiae serovar copenhageni (strain Fiocruz L1-130)).